Consider the following 121-residue polypeptide: Ribulose bisphosphate carboxylase small subunit (121 aa).

The protein belongs to the RuBisCO small chain family. In terms of assembly, heterohexadecamer of 8 large and 8 small subunits.

Functionally, ruBisCO catalyzes two reactions: the carboxylation of D-ribulose 1,5-bisphosphate, the primary event in carbon dioxide fixation, as well as the oxidative fragmentation of the pentose substrate. Both reactions occur simultaneously and in competition at the same active site. Although the small subunit is not catalytic it is essential for maximal activity. The sequence is that of Ribulose bisphosphate carboxylase small subunit from Alvinoconcha hessleri symbiotic bacterium.